The following is a 177-amino-acid chain: Apoptosis regulatory protein Siva (177 aa).

Tyrosine 34 is subject to Phosphotyrosine; by ABL2. The interaction with BCL2L1 isoform Bcl-x(L) and inhibition of BCL2L1 anti-apoptotic activity stretch occupies residues 36 to 55 (REVFERTKQLLFQGAQAYRD).

As to quaternary structure, binds through its N-terminal region to the C-terminus of CD27 and to PXMP2/PMP22. Binds to the C-terminus of TNFRSF18/GITR. Binds to BCL2L1/BCLX isoform Bcl-x(L) but not to BAX. Zn(2+) serves as cofactor. As to expression, in post-ischemic kidney, found in cells lining the S3 segment of proximal tubules at 12 hours and 1 day post-ischemia. At five and seven days post-ischemia, found in epithelial cells of papillary proliferations in regenerating tubules.

Its subcellular location is the cytoplasm. The protein resides in the nucleus. Functionally, induces CD27-mediated apoptosis. Inhibits BCL2L1 isoform Bcl-x(L) anti-apoptotic activity. Inhibits activation of NF-kappa-B and promotes T-cell receptor-mediated apoptosis. This is Apoptosis regulatory protein Siva (Siva1) from Rattus norvegicus (Rat).